The sequence spans 235 residues: Glycerol-3-phosphate acyltransferase (235 aa).

6 helical membrane passes run 2 to 22 (FTLI…TSII), 56 to 76 (TVTI…VVFF), 94 to 114 (LIAG…GFKG), 126 to 146 (FGIA…VVFL), 152 to 172 (VASI…KYLF), and 190 to 210 (FIHD…AAAI).

Belongs to the PlsY family. In terms of assembly, probably interacts with PlsX.

The protein resides in the cell inner membrane. It carries out the reaction an acyl phosphate + sn-glycerol 3-phosphate = a 1-acyl-sn-glycero-3-phosphate + phosphate. It participates in lipid metabolism; phospholipid metabolism. In terms of biological role, catalyzes the transfer of an acyl group from acyl-phosphate (acyl-PO(4)) to glycerol-3-phosphate (G3P) to form lysophosphatidic acid (LPA). This enzyme utilizes acyl-phosphate as fatty acyl donor, but not acyl-CoA or acyl-ACP. The sequence is that of Glycerol-3-phosphate acyltransferase from Chlorobium phaeobacteroides (strain BS1).